We begin with the raw amino-acid sequence, 192 residues long: GTP cyclohydrolase 1 (192 aa).

The Zn(2+) site is built by Cys-76, His-79, and Cys-148.

This sequence belongs to the GTP cyclohydrolase I family. As to quaternary structure, toroid-shaped homodecamer, composed of two pentamers of five dimers.

The catalysed reaction is GTP + H2O = 7,8-dihydroneopterin 3'-triphosphate + formate + H(+). Its pathway is cofactor biosynthesis; 7,8-dihydroneopterin triphosphate biosynthesis; 7,8-dihydroneopterin triphosphate from GTP: step 1/1. The sequence is that of GTP cyclohydrolase 1 from Carboxydothermus hydrogenoformans (strain ATCC BAA-161 / DSM 6008 / Z-2901).